Reading from the N-terminus, the 178-residue chain is Tetratricopeptide repeat protein 9C (178 aa).

TPR repeat units lie at residues 15–48, 79–114, and 115–148; these read ASSF…LRSL, ADCY…QPEN, and VKAL…APKD.

This sequence belongs to the TTC9 family.

The polypeptide is Tetratricopeptide repeat protein 9C (ttc9c) (Xenopus tropicalis (Western clawed frog)).